Here is a 218-residue protein sequence, read N- to C-terminus: Small ribosomal subunit protein mS34 (218 aa).

Belongs to the mitochondrion-specific ribosomal protein mS34 family. As to quaternary structure, component of the mitochondrial ribosome small subunit (28S) which comprises a 12S rRNA and about 30 distinct proteins. In terms of tissue distribution, widely expressed (at protein liver).

It is found in the mitochondrion. Its function is as follows. Required for mitochondrial translation, plays a role in maintaining the stability of the small ribosomal subunit and the 12S rRNA that are required for mitoribosome formation. This is Small ribosomal subunit protein mS34 (Mrps34) from Mus musculus (Mouse).